Here is a 132-residue protein sequence, read N- to C-terminus: Small ribosomal subunit protein uS8 (132 aa).

This sequence belongs to the universal ribosomal protein uS8 family. In terms of assembly, part of the 30S ribosomal subunit. Contacts proteins S5 and S12.

Its function is as follows. One of the primary rRNA binding proteins, it binds directly to 16S rRNA central domain where it helps coordinate assembly of the platform of the 30S subunit. The sequence is that of Small ribosomal subunit protein uS8 from Mycobacterium sp. (strain KMS).